Consider the following 348-residue polypeptide: Dihydroorotase (348 aa).

2 residues coordinate Zn(2+): His17 and His19. Residues 19–21 and Asn45 contribute to the substrate site; that span reads HLR. Lys103, His140, and His178 together coordinate Zn(2+). Lys103 bears the N6-carboxylysine mark. Residue His140 coordinates substrate. Residue Leu223 participates in substrate binding. Asp251 is a Zn(2+) binding site. Residue Asp251 is part of the active site. Substrate contacts are provided by His255 and Ala267.

It belongs to the metallo-dependent hydrolases superfamily. DHOase family. Class II DHOase subfamily. Homodimer. It depends on Zn(2+) as a cofactor.

The catalysed reaction is (S)-dihydroorotate + H2O = N-carbamoyl-L-aspartate + H(+). It functions in the pathway pyrimidine metabolism; UMP biosynthesis via de novo pathway; (S)-dihydroorotate from bicarbonate: step 3/3. In terms of biological role, catalyzes the reversible cyclization of carbamoyl aspartate to dihydroorotate. The polypeptide is Dihydroorotase (Shigella boydii serotype 4 (strain Sb227)).